A 318-amino-acid polypeptide reads, in one-letter code: NADH-ubiquinone oxidoreductase chain 1 (318 aa).

8 helical membrane-spanning segments follow: residues Phe2–Leu22, Phe69–Leu89, Met102–Ala122, Leu146–Thr166, His171–Ala191, Ile231–Leu251, Glu253–Val273, and Leu294–Ile314.

It belongs to the complex I subunit 1 family. Core subunit of respiratory chain NADH dehydrogenase (Complex I) which is composed of 45 different subunits.

It is found in the mitochondrion inner membrane. The enzyme catalyses a ubiquinone + NADH + 5 H(+)(in) = a ubiquinol + NAD(+) + 4 H(+)(out). Functionally, core subunit of the mitochondrial membrane respiratory chain NADH dehydrogenase (Complex I) which catalyzes electron transfer from NADH through the respiratory chain, using ubiquinone as an electron acceptor. Essential for the catalytic activity and assembly of complex I. This is NADH-ubiquinone oxidoreductase chain 1 (MT-ND1) from Dugong dugon (Dugong).